Here is a 539-residue protein sequence, read N- to C-terminus: MNEYGCNVCNEEYSARDPLKCPRVLTGCGHTICHNCAISIAGRNSSIFCPFDRTATQIPGGDLQNLKKNFALLELLEKIADGGGLLEKSGEVVKFDRYSKERLLNLECDEDSEHVAVIYCTVCDSNLCERCSESTHSTNVLSKHRRIPLTEKPPPLVHCRLHSSYVVEFVCKELSCDTESPLMCMMCRDYGRHKGHSHVLIEKEVEDLREKVREHLGELSKQSETIGNALHSIDSVIHELTPGQEDGSLEETRQEVRNHFRRLRTALDRDEEDAVETVDRYARNRVESLQTQKERLEAISSKIGNTCTTLQKALIMERGKILDRKDDLLALAESTAAEPTAVLDQSQLSTRIAFSFLNDRKLHIGDFIESRVVLLGLDGAGKTSIVRRLKKVQMDTVMAPHPTIGFNIETIHYKNYRLNFWDVGGLPKLRHLWKHYYSNAQAIFYVIDGYAVERFSEAIKELNRVMSDPLVGTCPVIVAVNRKDGYALNGHMDALLSQLEALPFQHHFHCCDAATGSGIDQIIDQITVCLSRLNGTCPV.

The RING-type zinc finger occupies 6 to 53 (CNVCNEEYSARDPLKCPRVLTGCGHTICHNCAISIAGRNSSIFCPFDR). The B box-type zinc-finger motif lies at 103–149 (LLNLECDEDSEHVAVIYCTVCDSNLCERCSESTHSTNVLSKHRRIPL). The interval 369-539 (ESRVVLLGLD…LSRLNGTCPV (171 aa)) is ARF-like. Residues 376 to 383 (GLDGAGKT), 422 to 426 (DVGGL), and 481 to 484 (NRKD) each bind GTP.

The protein in the C-terminal section; belongs to the small GTPase superfamily. Arf family.

The catalysed reaction is S-ubiquitinyl-[E2 ubiquitin-conjugating enzyme]-L-cysteine + [acceptor protein]-L-lysine = [E2 ubiquitin-conjugating enzyme]-L-cysteine + N(6)-ubiquitinyl-[acceptor protein]-L-lysine.. It participates in protein modification; protein ubiquitination. Functionally, acts as an E3 ubiquitin-protein ligase. The sequence is that of E3 ubiquitin-protein ligase arc-1 (arc-1) from Caenorhabditis elegans.